The primary structure comprises 335 residues: Holliday junction branch migration complex subunit RuvB (335 aa).

Residues 1–183 (MDERIISSET…FGVIDHLEFY (183 aa)) form a large ATPase domain (RuvB-L) region. Residues leucine 22, arginine 23, glycine 64, lysine 67, threonine 68, threonine 69, 130-132 (EDY), arginine 173, tyrosine 183, and arginine 220 each bind ATP. Threonine 68 contributes to the Mg(2+) binding site. The tract at residues 184–254 (TEEQLTEIVL…LAKEALTLLQ (71 aa)) is small ATPAse domain (RuvB-S). Residues 257–335 (PRGLDTIDQK…HLGISYEKEV (79 aa)) form a head domain (RuvB-H) region. Positions 293, 312, and 317 each coordinate DNA.

Belongs to the RuvB family. Homohexamer. Forms an RuvA(8)-RuvB(12)-Holliday junction (HJ) complex. HJ DNA is sandwiched between 2 RuvA tetramers; dsDNA enters through RuvA and exits via RuvB. An RuvB hexamer assembles on each DNA strand where it exits the tetramer. Each RuvB hexamer is contacted by two RuvA subunits (via domain III) on 2 adjacent RuvB subunits; this complex drives branch migration. In the full resolvosome a probable DNA-RuvA(4)-RuvB(12)-RuvC(2) complex forms which resolves the HJ.

The protein localises to the cytoplasm. The catalysed reaction is ATP + H2O = ADP + phosphate + H(+). Its function is as follows. The RuvA-RuvB-RuvC complex processes Holliday junction (HJ) DNA during genetic recombination and DNA repair, while the RuvA-RuvB complex plays an important role in the rescue of blocked DNA replication forks via replication fork reversal (RFR). RuvA specifically binds to HJ cruciform DNA, conferring on it an open structure. The RuvB hexamer acts as an ATP-dependent pump, pulling dsDNA into and through the RuvAB complex. RuvB forms 2 homohexamers on either side of HJ DNA bound by 1 or 2 RuvA tetramers; 4 subunits per hexamer contact DNA at a time. Coordinated motions by a converter formed by DNA-disengaged RuvB subunits stimulates ATP hydrolysis and nucleotide exchange. Immobilization of the converter enables RuvB to convert the ATP-contained energy into a lever motion, pulling 2 nucleotides of DNA out of the RuvA tetramer per ATP hydrolyzed, thus driving DNA branch migration. The RuvB motors rotate together with the DNA substrate, which together with the progressing nucleotide cycle form the mechanistic basis for DNA recombination by continuous HJ branch migration. Branch migration allows RuvC to scan DNA until it finds its consensus sequence, where it cleaves and resolves cruciform DNA. This is Holliday junction branch migration complex subunit RuvB from Listeria monocytogenes serovar 1/2a (strain ATCC BAA-679 / EGD-e).